The primary structure comprises 149 residues: General odorant-binding protein 99b (149 aa).

The N-terminal stretch at 1–16 (MKVLIVLLLGLAFVLA) is a signal peptide. 3 disulfides stabilise this stretch: C40/C71, C67/C125, and C114/C134.

The protein belongs to the PBP/GOBP family. In terms of tissue distribution, expressed in adult olfactory system. Expressed in subsets of sensilla in both olfactory organs, the maxillary palps, and third antennal segments.

It is found in the secreted. Functionally, present in the aqueous fluid surrounding olfactory sensory dendrites and are thought to aid in the capture and transport of hydrophobic odorants into and through this fluid. This chain is General odorant-binding protein 99b (Obp99b), found in Drosophila melanogaster (Fruit fly).